The following is a 152-amino-acid chain: Ribosome maturation factor RimP (152 aa).

It belongs to the RimP family.

Its subcellular location is the cytoplasm. Required for maturation of 30S ribosomal subunits. The chain is Ribosome maturation factor RimP from Yersinia pestis.